Here is a 141-residue protein sequence, read N- to C-terminus: Putative pre-16S rRNA nuclease (141 aa).

It belongs to the YqgF nuclease family.

It localises to the cytoplasm. Its function is as follows. Could be a nuclease involved in processing of the 5'-end of pre-16S rRNA. The sequence is that of Putative pre-16S rRNA nuclease from Cupriavidus taiwanensis (strain DSM 17343 / BCRC 17206 / CCUG 44338 / CIP 107171 / LMG 19424 / R1) (Ralstonia taiwanensis (strain LMG 19424)).